The sequence spans 466 residues: tRNA modification GTPase MnmE (466 aa).

Residues arginine 22, glutamate 87, and arginine 126 each coordinate (6S)-5-formyl-5,6,7,8-tetrahydrofolate. The region spanning 222 to 382 (GWRTVIVGRP…LTELIRRMVY (161 aa)) is the TrmE-type G domain. Asparagine 232 lines the K(+) pocket. Residues 232-237 (NVGKSS), 251-257 (TEIPGTT), and 276-279 (DTAG) each bind GTP. Serine 236 serves as a coordination point for Mg(2+). K(+) is bound by residues threonine 251, isoleucine 253, and threonine 256. Position 257 (threonine 257) interacts with Mg(2+). (6S)-5-formyl-5,6,7,8-tetrahydrofolate is bound at residue lysine 466.

This sequence belongs to the TRAFAC class TrmE-Era-EngA-EngB-Septin-like GTPase superfamily. TrmE GTPase family. As to quaternary structure, homodimer. Heterotetramer of two MnmE and two MnmG subunits. It depends on K(+) as a cofactor.

Its subcellular location is the cytoplasm. Exhibits a very high intrinsic GTPase hydrolysis rate. Involved in the addition of a carboxymethylaminomethyl (cmnm) group at the wobble position (U34) of certain tRNAs, forming tRNA-cmnm(5)s(2)U34. This Heliobacterium modesticaldum (strain ATCC 51547 / Ice1) protein is tRNA modification GTPase MnmE.